Reading from the N-terminus, the 359-residue chain is 3-dehydroquinate synthase (359 aa).

NAD(+)-binding positions include 71–76 (DGEAYK), 105–109 (GVVGD), 129–130 (TT), Lys-142, and Lys-151. Zn(2+)-binding residues include Glu-184, His-247, and His-264.

Belongs to the sugar phosphate cyclases superfamily. Dehydroquinate synthase family. Co(2+) serves as cofactor. Zn(2+) is required as a cofactor. Requires NAD(+) as cofactor.

The protein localises to the cytoplasm. The enzyme catalyses 7-phospho-2-dehydro-3-deoxy-D-arabino-heptonate = 3-dehydroquinate + phosphate. It participates in metabolic intermediate biosynthesis; chorismate biosynthesis; chorismate from D-erythrose 4-phosphate and phosphoenolpyruvate: step 2/7. Catalyzes the conversion of 3-deoxy-D-arabino-heptulosonate 7-phosphate (DAHP) to dehydroquinate (DHQ). In Burkholderia orbicola (strain MC0-3), this protein is 3-dehydroquinate synthase.